The chain runs to 453 residues: C4-dicarboxylate TRAP transporter large permease protein DctM (453 aa).

Helical transmembrane passes span 2-22 (AVALLFILVIGMMIVGVPIAI), 50-70 (AFAGHYTLLAIPFFILASTFM), 82-102 (FAIAMVGWFRGGLAIASVVAC), 104-124 (MFAALSGSSPATVVAIGSIVI), 139-159 (GVICNAGTLGILIPPSIVMVV), 172-192 (FLGGVVPGLLAGLMLIIAIYI), 217-237 (ASWGLLLVVIILGGIYGGIFT), 243-263 (AVAAVYSFFIANFIYRDMGPF), 289-309 (LYDAGKLTIMLMFIIANALIL), 326-346 (MLSAGLGPITFLIVVNLILLV), 356-376 (LLVIVAPLVFPIAIALGIDPI), 380-400 (IMMVVNMEIGMITPPVGLNLF), and 417-437 (ALPWVGVMFLFLIIVTYVPWV).

Belongs to the TRAP transporter large permease family. As to quaternary structure, the complex comprises the extracytoplasmic solute receptor protein DctP, and the two transmembrane proteins DctQ and DctM.

It localises to the cell inner membrane. In terms of biological role, part of the tripartite ATP-independent periplasmic (TRAP) transport system DctPQM involved in C4-dicarboxylates uptake. The chain is C4-dicarboxylate TRAP transporter large permease protein DctM from Vibrio cholerae serotype O1 (strain ATCC 39315 / El Tor Inaba N16961).